A 240-amino-acid chain; its full sequence is Eukaryotic translation initiation factor 4E-2 (240 aa).

The disordered stretch occupies residues 1-29; the sequence is MVVMDSPVSGRMADQNIDPNTTTSPSPIE. A compositionally biased stretch (polar residues) spans 17–26; sequence IDPNTTTSPS. EIF4G-binding regions lie at residues 65-68 and 75-111; these read HCFQ and FDNPSSKSNQVIWGSSLRSLYTFATIEEFWSLYNNIH. MRNA contacts are provided by residues 83–88, Lys-115, and 133–134; these read NQVIWG and WE. Cys-138 and Cys-176 are joined by a disulfide. The segment at 159-168 is EIF4G-binding; that stretch reads NTLLALVGEQ. MRNA contacts are provided by residues 183-188 and 228-232; these read RTRGDR and KTLDR.

It belongs to the eukaryotic initiation factor 4E family. In terms of assembly, EIF4F is a multi-subunit complex, the composition of which varies with external and internal environmental conditions. It is composed of at least EIF4A, EIF4E and EIF4G. EIF4E is also known to interact with other partners. In higher plants two isoforms of EIF4F have been identified, named isoform EIF4F and isoform EIF(iso)4F. Isoform EIF4F has subunits p220 and p26, whereas isoform EIF(iso)4F has subunits p82 and p28. According to the redox status, the Cys-138-Cys-176 disulfide bridge may have a role in regulating protein function by affecting its ability to bind capped mRNA.

The protein resides in the nucleus. The protein localises to the cytoplasm. Component of the protein complex eIF4F, which is involved in the recognition of the mRNA cap, ATP-dependent unwinding of 5'-terminal secondary structure and recruitment of mRNA to the ribosome. Recognizes and binds the 7-methylguanosine-containing mRNA cap during an early step in the initiation of protein synthesis and facilitates ribosome binding by inducing the unwinding of the mRNAs secondary structures. The sequence is that of Eukaryotic translation initiation factor 4E-2 from Arabidopsis thaliana (Mouse-ear cress).